The primary structure comprises 268 residues: Ribosomal RNA small subunit methyltransferase A (268 aa).

S-adenosyl-L-methionine-binding residues include Asn-23, Leu-25, Gly-50, Glu-72, Asp-94, and Asn-116.

This sequence belongs to the class I-like SAM-binding methyltransferase superfamily. rRNA adenine N(6)-methyltransferase family. RsmA subfamily.

The protein localises to the cytoplasm. The catalysed reaction is adenosine(1518)/adenosine(1519) in 16S rRNA + 4 S-adenosyl-L-methionine = N(6)-dimethyladenosine(1518)/N(6)-dimethyladenosine(1519) in 16S rRNA + 4 S-adenosyl-L-homocysteine + 4 H(+). Its function is as follows. Specifically dimethylates two adjacent adenosines (A1518 and A1519) in the loop of a conserved hairpin near the 3'-end of 16S rRNA in the 30S particle. May play a critical role in biogenesis of 30S subunits. This Mycoplasmoides gallisepticum (strain R(low / passage 15 / clone 2)) (Mycoplasma gallisepticum) protein is Ribosomal RNA small subunit methyltransferase A.